The chain runs to 348 residues: MTAPSQVLKIRRPDDWHVHLRDGDMLKTVVPYTSEIYGRAIVMPNLASPITTVDAAIAYRQRILDAVPAGHDFTPLMTCYLTDSLDADELERGFHEGVFTAAKLYPANATTNSSHGVTSVDAIMPVLERMEKLGMPLLVHGEVTHADVDIFDREARFIDTVMEPLRQRLTALKVVFEHITTKDAAQYVRDGSYNLAATITPQHLMFNRNDMLVGGIRPHLYCLPILKRNIHQQALRDLVASGFTRAFLGTDSAPHSRHRKETRCGCAGCFNAPSALGSYAAVFEEMNALAHFEAFCSLNGPQFYGLPVNTGWVELVRDEQQIPENIALADDSLVPFLAGETVRWSVKK.

Residues histidine 17 and histidine 19 each contribute to the Zn(2+) site. Substrate is bound by residues 19–21 (HLR) and asparagine 45. Lysine 103, histidine 140, and histidine 178 together coordinate Zn(2+). Residue lysine 103 is modified to N6-carboxylysine. Histidine 140 is a substrate binding site. A substrate-binding site is contributed by leucine 223. Zn(2+) is bound at residue aspartate 251. Aspartate 251 is a catalytic residue. Substrate contacts are provided by histidine 255 and alanine 267.

This sequence belongs to the metallo-dependent hydrolases superfamily. DHOase family. Class II DHOase subfamily. Homodimer. Zn(2+) serves as cofactor.

The catalysed reaction is (S)-dihydroorotate + H2O = N-carbamoyl-L-aspartate + H(+). The protein operates within pyrimidine metabolism; UMP biosynthesis via de novo pathway; (S)-dihydroorotate from bicarbonate: step 3/3. Its function is as follows. Catalyzes the reversible cyclization of carbamoyl aspartate to dihydroorotate. The protein is Dihydroorotase of Salmonella typhi.